A 759-amino-acid polypeptide reads, in one-letter code: Protein YdeP (759 aa).

[4Fe-4S] cluster-binding residues include Cys49 and Cys52.

Belongs to the prokaryotic molybdopterin-containing oxidoreductase family. Requires [4Fe-4S] cluster as cofactor. The cofactor is Mo-bis(molybdopterin guanine dinucleotide).

Probably involved in acid resistance. The chain is Protein YdeP (ydeP) from Escherichia coli (strain K12).